A 700-amino-acid polypeptide reads, in one-letter code: Methionine--tRNA ligase (700 aa).

The 'HIGH' region motif lies at 16–26 (PYANGAFHVGH). Cys-148, Cys-151, Cys-161, and Cys-164 together coordinate Zn(2+). Positions 337-341 (KMSKS) match the 'KMSKS' region motif. Lys-340 serves as a coordination point for ATP. In terms of domain architecture, tRNA-binding spans 594–700 (DFAKIDLRIA…PGAEPGMRVG (107 aa)).

It belongs to the class-I aminoacyl-tRNA synthetase family. MetG type 1 subfamily. Homodimer. The cofactor is Zn(2+).

The protein resides in the cytoplasm. It catalyses the reaction tRNA(Met) + L-methionine + ATP = L-methionyl-tRNA(Met) + AMP + diphosphate. Its function is as follows. Is required not only for elongation of protein synthesis but also for the initiation of all mRNA translation through initiator tRNA(fMet) aminoacylation. The sequence is that of Methionine--tRNA ligase from Janthinobacterium sp. (strain Marseille) (Minibacterium massiliensis).